The following is a 132-amino-acid chain: Peptide methionine sulfoxide reductase MsrB (132 aa).

The MsrB domain maps to 8 to 130; it reads LDSWREELTE…NSASLKLVPR (123 aa). Zn(2+) contacts are provided by Cys47, Cys50, Cys96, and Cys99. The Nucleophile role is filled by Cys119.

It belongs to the MsrB Met sulfoxide reductase family. Zn(2+) is required as a cofactor.

It catalyses the reaction L-methionyl-[protein] + [thioredoxin]-disulfide + H2O = L-methionyl-(R)-S-oxide-[protein] + [thioredoxin]-dithiol. The chain is Peptide methionine sulfoxide reductase MsrB from Pseudomonas paraeruginosa (strain DSM 24068 / PA7) (Pseudomonas aeruginosa (strain PA7)).